Consider the following 545-residue polypeptide: Chaperonin GroEL (545 aa).

Residues 30–33 (TLGP), Lys51, 87–91 (DGTTT), Gly415, and Asp496 each bind ATP.

It belongs to the chaperonin (HSP60) family. In terms of assembly, forms a cylinder of 14 subunits composed of two heptameric rings stacked back-to-back. Interacts with the co-chaperonin GroES.

It is found in the cytoplasm. The catalysed reaction is ATP + H2O + a folded polypeptide = ADP + phosphate + an unfolded polypeptide.. Its function is as follows. Together with its co-chaperonin GroES, plays an essential role in assisting protein folding. The GroEL-GroES system forms a nano-cage that allows encapsulation of the non-native substrate proteins and provides a physical environment optimized to promote and accelerate protein folding. The polypeptide is Chaperonin GroEL (Rhodobacter capsulatus (Rhodopseudomonas capsulata)).